The sequence spans 963 residues: Aminopeptidase N (963 aa).

The Cytoplasmic segment spans residues 2–8 (AKGFYIS). A helical; Signal-anchor for type II membrane protein membrane pass occupies residues 9–32 (KALGILGILLGVAAVATIIALSVV). The tract at residues 33-64 (YAQEKNKNAEHVPQAPTSPTITTTAAITLDQS) is cytosolic Ser/Thr-rich junction. Residues 33-963 (YAQEKNKNAE…VVLNWFIEHS (931 aa)) are Extracellular-facing. The interval 65-963 (KPWNRYRLPT…VVLNWFIEHS (899 aa)) is metalloprotease. N-linked (GlcNAc...) asparagine glycosylation is found at Asn82 and Asn124. Residue Tyr171 is modified to Sulfotyrosine. 6 N-linked (GlcNAc...) asparagine glycosylation sites follow: Asn229, Asn237, Asn258, Asn286, Asn314, and Asn328. A substrate-binding site is contributed by 347 to 351 (GAMEN). His383 is a Zn(2+) binding site. Glu384 serves as the catalytic Proton acceptor. Positions 387 and 406 each coordinate Zn(2+). N-linked (GlcNAc...) asparagine glycans are attached at residues Asn506, Asn556, Asn569, Asn622, Asn646, and Asn736. The interval 717–813 (KYLRKQVEPL…DQWDFAWGQL (97 aa)) is interaction with TGEV spike glycoprotein. 2 disulfides stabilise this stretch: Cys758–Cys765 and Cys795–Cys831.

It belongs to the peptidase M1 family. In terms of assembly, homodimer. Interacts with SLC6A19. As to quaternary structure, (Microbial infection) Interacts with TGEV and PRCoV spike glycoprotein. Zn(2+) is required as a cofactor. Sulfated. In terms of processing, N- and O-glycosylated. Post-translationally, may undergo proteolysis and give rise to a soluble form.

The protein localises to the cell membrane. It catalyses the reaction Release of an N-terminal amino acid, Xaa-|-Yaa- from a peptide, amide or arylamide. Xaa is preferably Ala, but may be most amino acids including Pro (slow action). When a terminal hydrophobic residue is followed by a prolyl residue, the two may be released as an intact Xaa-Pro dipeptide.. In terms of biological role, broad specificity aminopeptidase which plays a role in the final digestion of peptides generated from hydrolysis of proteins by gastric and pancreatic proteases. Also involved in the processing of various peptides including peptide hormones, such as angiotensin III and IV, neuropeptides, and chemokines. May also be involved the cleavage of peptides bound to major histocompatibility complex class II molecules of antigen presenting cells. May have a role in angiogenesis and promote cholesterol crystallization. It is able to degrade Leu-enkephalin and Met-enkephalin but not cholecystokinin CCK8, neuromedin C (GRP-10), somatostatin-14, substance P and vasoactive intestinal peptide. May have a role in amino acid transport by acting as binding partner of amino acid transporter SLC6A19 and regulating its activity. Functionally, (Microbial infection) In case of porcine transmissible gastroenteritis coronavirus (TGEV) and porcine respiratory coronavirus (PRCoV) infections, serves as a receptor for TGEV and PRCoV spike glycoprotein in a species-specific manner. In Sus scrofa (Pig), this protein is Aminopeptidase N (ANPEP).